Here is a 285-residue protein sequence, read N- to C-terminus: Pantothenate synthetase (285 aa).

30-37 (MGNLHRGH) contributes to the ATP binding site. The active-site Proton donor is the histidine 37. Residue glutamine 61 coordinates (R)-pantoate. Residue glutamine 61 coordinates beta-alanine. Residue 149 to 152 (GRKD) participates in ATP binding. Glutamine 155 contributes to the (R)-pantoate binding site. ATP is bound by residues valine 178 and 186–189 (LSSR).

The protein belongs to the pantothenate synthetase family. As to quaternary structure, homodimer.

It is found in the cytoplasm. The enzyme catalyses (R)-pantoate + beta-alanine + ATP = (R)-pantothenate + AMP + diphosphate + H(+). It participates in cofactor biosynthesis; (R)-pantothenate biosynthesis; (R)-pantothenate from (R)-pantoate and beta-alanine: step 1/1. Its function is as follows. Catalyzes the condensation of pantoate with beta-alanine in an ATP-dependent reaction via a pantoyl-adenylate intermediate. This is Pantothenate synthetase from Halorhodospira halophila (strain DSM 244 / SL1) (Ectothiorhodospira halophila (strain DSM 244 / SL1)).